A 277-amino-acid polypeptide reads, in one-letter code: Myelin proteolipid protein (277 aa).

At 1–10 (MGLLECCARC) the chain is on the cytoplasmic side. S-palmitoyl cysteine attachment occurs at residues Cys6, Cys7, and Cys10. A helical transmembrane segment spans residues 11–36 (LVGAPFASLVATGLCFFGVALFCGCG). Topologically, residues 37–59 (HEALTGTEKLIETYFSKNYQDYE) are extracellular. A helical membrane pass occupies residues 60–88 (YLINVIHAFQYVIYGTASFFFLYGALLLA). Residues 89–151 (EGFYTTGAVR…LGKWLGHPDK (63 aa)) lie on the Cytoplasmic side of the membrane. Cys109 carries S-palmitoyl cysteine lipidation. Ser114 carries the phosphoserine modification. A phosphothreonine mark is found at Thr116 and Thr118. S-palmitoyl cysteine attachment occurs at residues Cys139 and Cys141. A helical membrane pass occupies residues 152 to 178 (FVGITYALTIVWLLVFACSAVPVYIYF). The Extracellular segment spans residues 179 to 238 (NTWTTCQSIAFPSKTSASIGSLCADARMYGVLPWNAFPGKVCGSNLLSICKTAEFQMTFH). 2 disulfides stabilise this stretch: Cys184/Cys228 and Cys201/Cys220. Residue Ser199 is the site of O-palmitoyl serine attachment. Residues 239–268 (LFIAAFVGAAATLVSLLTFMIAATYNFAVL) form a helical membrane-spanning segment. Over 269-277 (KLMGRGTKF) the chain is Cytoplasmic.

This sequence belongs to the myelin proteolipid protein family.

It localises to the cell membrane. It is found in the myelin membrane. In terms of biological role, this is the major myelin protein from the central nervous system. It plays an important role in the formation or maintenance of the multilamellar structure of myelin. This Canis lupus familiaris (Dog) protein is Myelin proteolipid protein (PLP1).